Here is a 146-residue protein sequence, read N- to C-terminus: Mediator of RNA polymerase II transcription subunit 10 (146 aa).

The protein belongs to the Mediator complex subunit 10 family. In terms of assembly, component of the Mediator complex.

The protein resides in the nucleus. Functionally, component of the Mediator complex, a coactivator involved in the regulated transcription of nearly all RNA polymerase II-dependent genes. Mediator functions as a bridge to convey information from gene-specific regulatory proteins to the basal RNA polymerase II transcription machinery. Mediator is recruited to promoters by direct interactions with regulatory proteins and serves as a scaffold for the assembly of a functional preinitiation complex with RNA polymerase II and the general transcription factors. This Scheffersomyces stipitis (strain ATCC 58785 / CBS 6054 / NBRC 10063 / NRRL Y-11545) (Yeast) protein is Mediator of RNA polymerase II transcription subunit 10 (NUT2).